The sequence spans 469 residues: Glutamate--tRNA ligase (469 aa).

The 'HIGH' region signature appears at 11–21; it reads PSPTGFIHLGN. Basic and acidic residues predominate over residues 118-131; that stretch reads GEKPRYDGTWRPEP. The tract at residues 118–139 is disordered; it reads GEKPRYDGTWRPEPGKVLPEPP. The 'KMSKS' region motif lies at 243-247; the sequence is KMSKR. Lysine 246 is a binding site for ATP.

The protein belongs to the class-I aminoacyl-tRNA synthetase family. Glutamate--tRNA ligase type 1 subfamily. Monomer.

The protein resides in the cytoplasm. The enzyme catalyses tRNA(Glu) + L-glutamate + ATP = L-glutamyl-tRNA(Glu) + AMP + diphosphate. Its function is as follows. Catalyzes the attachment of glutamate to tRNA(Glu) in a two-step reaction: glutamate is first activated by ATP to form Glu-AMP and then transferred to the acceptor end of tRNA(Glu). This chain is Glutamate--tRNA ligase, found in Burkholderia pseudomallei (strain 668).